Reading from the N-terminus, the 748-residue chain is Far upstream element-binding protein 2 (748 aa).

A disordered region spans residues 1 to 78 (MSDYNTGGPP…GIRKDAFADA (78 aa)). Serine 2 bears the N-acetylserine mark. Over residues 8–17 (GPPPGPPPPA) the composition is skewed to pro residues. Gly residues-rich tracts occupy residues 18-28 (GGGGGAAGAGG) and 36-69 (GAGD…GGPG). An Omega-N-methylarginine modification is found at arginine 40. Lysine 88 is modified (N6-acetyllysine). Positions 90–148 (GGDAATTVNNNTPDFGFGGQKRQLEDGDQPDSKKLASQGDSIGSQLGPIHPPPRTSMTE) are disordered. Residue threonine 101 is modified to Phosphothreonine. The span at 111-123 (RQLEDGDQPDSKK) shows a compositional bias: basic and acidic residues. Lysine 122 is covalently cross-linked (Glycyl lysine isopeptide (Lys-Gly) (interchain with G-Cter in SUMO1); alternate). A Glycyl lysine isopeptide (Lys-Gly) (interchain with G-Cter in SUMO2); alternate cross-link involves residue lysine 122. Serine 126, serine 130, serine 182, serine 185, serine 194, and serine 275 each carry phosphoserine. 3 consecutive KH domains span residues 145-209 (SMTE…KMML), 234-300 (GTVQ…CEMV), and 323-387 (GGGI…ARII). Residues 394 to 422 (LRSGPPGPPGAPGMPPGGRGRGRGQGNWG) are disordered. Over residues 398–408 (PPGPPGAPGMP) the composition is skewed to pro residues. Residues 409-422 (PGGRGRGRGQGNWG) are compositionally biased toward gly residues. An omega-N-methylarginine mark is found at arginine 412, arginine 414, arginine 416, and arginine 443. Positions 425–492 (GGEMTFSIPT…QQIDHAKQLI (68 aa)) constitute a KH 4 domain. Phosphoserine is present on serine 481. A disordered region spans residues 498–570 (GPLCPVGPGP…HDPNKAAAAA (73 aa)). 2 stretches are compositionally biased toward pro residues: residues 502–521 (PVGP…PFNP) and 529–543 (PGAP…PHQY). Copy 1 of the repeat occupies 572 to 583 (DPNAAWAAYYSH). Residues 572–685 (DPNAAWAAYY…SAAWAEYYRQ (114 aa)) are 4 X 12 AA imperfect repeats. The segment covering 588 to 614 (PPGPVPGPAPAPAAPPAQGEPPQPPPT) has biased composition (pro residues). Disordered stretches follow at residues 588–650 (PPGP…KAWE), 659–678 (VATG…YSAA), and 689–735 (YYGQ…PALV). Repeat copies occupy residues 618 to 629 (DYTKAWEEYYKK), 644 to 655 (DYTKAWEEYYKK), and 674 to 685 (DYSAAWAEYYRQ).

It belongs to the KHSRP family. In terms of assembly, part of a ternary complex containing FUBP2, PTBP1, PTBP2 and HNRPH1. Interacts with PARN. Interacts with PQBP1.

The protein localises to the nucleus. It is found in the cytoplasm. Binds to the dendritic targeting element and may play a role in mRNA trafficking. Part of a ternary complex that binds to the downstream control sequence (DCS) of the pre-mRNA. Mediates exon inclusion in transcripts that are subject to tissue-specific alternative splicing. May interact with single-stranded DNA from the far-upstream element (FUSE). May activate gene expression. Also involved in degradation of inherently unstable mRNAs that contain AU-rich elements (AREs) in their 3'-UTR, possibly by recruiting degradation machinery to ARE-containing mRNAs. The polypeptide is Far upstream element-binding protein 2 (Khsrp) (Mus musculus (Mouse)).